A 32-amino-acid polypeptide reads, in one-letter code: Photosystem II reaction center protein Z (32 aa).

Residues 9-31 (FILLGAVTWAILVFIVGSLNSYV) form a helical membrane-spanning segment.

This sequence belongs to the PsbZ family. In terms of assembly, PSII is composed of 1 copy each of membrane proteins PsbA, PsbB, PsbC, PsbD, PsbE, PsbF, PsbH, PsbI, PsbJ, PsbK, PsbL, PsbM, PsbT, PsbY, PsbZ, Psb30/Ycf12, at least 3 peripheral proteins of the oxygen-evolving complex and a large number of cofactors. It forms dimeric complexes.

It is found in the plastid. The protein resides in the chloroplast thylakoid membrane. Functionally, may control the interaction of photosystem II (PSII) cores with the light-harvesting antenna, regulates electron flow through the 2 photosystem reaction centers. PSII is a light-driven water plastoquinone oxidoreductase, using light energy to abstract electrons from H(2)O, generating a proton gradient subsequently used for ATP formation. In Euglena stellata, this protein is Photosystem II reaction center protein Z.